Consider the following 207-residue polypeptide: Probable GTP-binding protein EngB (207 aa).

The EngB-type G domain maps to 22–193 (RVPEIVFAGR…LAHFDHYLSG (172 aa)). GTP is bound by residues 30–37 (GRSNVGKS), 57–61 (GKTRL), 75–78 (DIPG), 142–145 (TKDD), and 172–174 (YSS). Residues Ser37 and Thr59 each contribute to the Mg(2+) site.

It belongs to the TRAFAC class TrmE-Era-EngA-EngB-Septin-like GTPase superfamily. EngB GTPase family. It depends on Mg(2+) as a cofactor.

Functionally, necessary for normal cell division and for the maintenance of normal septation. The chain is Probable GTP-binding protein EngB from Chlorobium luteolum (strain DSM 273 / BCRC 81028 / 2530) (Pelodictyon luteolum).